Here is an 814-residue protein sequence, read N- to C-terminus: Putative serine/threonine-protein kinase-like protein CCR3 (814 aa).

The first 30 residues, 1-30 (MKRFINSTVTFSVTVTIAVIIFFLLSPVTS), serve as a signal peptide directing secretion. Residues Asn-6, Asn-68, Asn-136, Asn-215, Asn-226, Asn-251, Asn-260, Asn-275, Asn-299, and Asn-309 are each glycosylated (N-linked (GlcNAc...) asparagine). The Extracellular segment spans residues 31-393 (LGSGSTYAVV…SSPPSKALTR (363 aa)). Residues 366–381 (SQFPLPPPPPPPPPSP) are compositionally biased toward pro residues. The interval 366 to 388 (SQFPLPPPPPPPPPSPSTSSPPS) is disordered. The helical transmembrane segment at 394 to 414 (GLLAFAIVGSVGAFAGICSVV) threads the bilayer. Residues 415-814 (YCLWTGVCLG…SSGICSIVSD (400 aa)) are Cytoplasmic-facing. The segment at 433–478 (QPTITRGGSNSRSNSSNSRSLSIRRQGSRMLSMRRQRSGTSSMKHA) is disordered. The segment covering 441–457 (SNSRSNSSNSRSLSIRR) has biased composition (low complexity). Residues 496 to 794 (FSLENKIGSG…DIVGNLERAL (299 aa)) form the Protein kinase domain. Residues 502 to 510 (IGSGSFGVV) and Lys-524 contribute to the ATP site. Catalysis depends on Asp-631, which acts as the Proton acceptor.

This sequence belongs to the protein kinase superfamily. Ser/Thr protein kinase family. As to quaternary structure, homodimer. Expressed in roots, leaves, shoot apical meristems (SAM), and floral buds.

Its subcellular location is the membrane. It catalyses the reaction L-seryl-[protein] + ATP = O-phospho-L-seryl-[protein] + ADP + H(+). The enzyme catalyses L-threonyl-[protein] + ATP = O-phospho-L-threonyl-[protein] + ADP + H(+). In terms of biological role, serine/threonine-protein kinase. In Arabidopsis thaliana (Mouse-ear cress), this protein is Putative serine/threonine-protein kinase-like protein CCR3 (CCR3).